The sequence spans 348 residues: Killer cell immunoglobulin-like receptor 2DL1 (348 aa).

The signal sequence occupies residues 1–21 (MSLLVVSMACVGFFLLQGAWP). Topologically, residues 22 to 245 (HEGVHRKPSL…SKTGNPRHLH (224 aa)) are extracellular. 2 Ig-like C2-type domains span residues 42–107 (EETV…VTHS) and 142–205 (GENV…FHDS). C49 and C100 are disulfide-bonded. 4 N-linked (GlcNAc...) asparagine glycosylation sites follow: N67, N84, N144, and N178. A disulfide bond links C149 and C198. The interval 220–239 (VTGNPSNSWPSPTEPSSKTG) is disordered. A helical membrane pass occupies residues 246-264 (ILIGTSVVIILFILLFFLL). At 265–348 (HRWCSNKKNA…ESRSKVVSCP (84 aa)) the chain is on the cytoplasmic side.

This sequence belongs to the immunoglobulin superfamily. Interacts with ARRB2. Interacts with PTPN6; the interaction is enhanced by ARRB2. Interacts with PTPN11; the interaction is enhanced by ARRB2. As to expression, expressed by NK cells.

The protein resides in the cell membrane. In terms of biological role, receptor on natural killer (NK) cells for some HLA-C alleles such as w4 and w6. Inhibits the activity of NK cells thus preventing cell lysis. The polypeptide is Killer cell immunoglobulin-like receptor 2DL1 (Homo sapiens (Human)).